A 142-amino-acid polypeptide reads, in one-letter code: Large ribosomal subunit protein uL13 (142 aa).

The protein belongs to the universal ribosomal protein uL13 family. Part of the 50S ribosomal subunit.

Functionally, this protein is one of the early assembly proteins of the 50S ribosomal subunit, although it is not seen to bind rRNA by itself. It is important during the early stages of 50S assembly. This is Large ribosomal subunit protein uL13 from Idiomarina loihiensis (strain ATCC BAA-735 / DSM 15497 / L2-TR).